The primary structure comprises 221 residues: Coiled-coil domain-containing protein 70 (221 aa).

A coiled-coil region spans residues 129–168 (NALWEKDRNLLQEDKALWEEEKALWVEERALLEEEKALWE).

The chain is Coiled-coil domain-containing protein 70 (CCDC70) from Macaca fascicularis (Crab-eating macaque).